We begin with the raw amino-acid sequence, 132 residues long: MSKTLNIIWQYLRAFVLIYACLYAGIFIASLLPVTIPGSIIGMLILFVLLALQILPAKWVNPGCYVLIRYMALLFVPIGVGVMQYFDLLRAQFGPVVVSCAVCTLVVFLVVSWSSQLVHGERKVVGQKGSEE.

4 helical membrane passes run 7–27, 31–51, 63–83, and 93–113; these read IIWQ…AGIF, LLPV…VLLA, GCYV…VGVM, and FGPV…VVSW.

It belongs to the UPF0299 family.

Its subcellular location is the cell inner membrane. This chain is UPF0299 membrane protein YohJ, found in Shigella boydii serotype 18 (strain CDC 3083-94 / BS512).